A 488-amino-acid chain; its full sequence is Acetyl-coenzyme A carboxylase carboxyl transferase subunit beta, chloroplastic (488 aa).

Residues Ile189–Arg211 are disordered. A CoA carboxyltransferase N-terminal domain is found at Leu224–Asn488. Cys228, Cys231, Cys247, and Cys250 together coordinate Zn(2+). The C4-type zinc finger occupies Cys228–Cys250.

The protein belongs to the AccD/PCCB family. Acetyl-CoA carboxylase is a heterohexamer composed of biotin carboxyl carrier protein, biotin carboxylase and 2 subunits each of ACCase subunit alpha and ACCase plastid-coded subunit beta (accD). Zn(2+) serves as cofactor.

It is found in the plastid. The protein localises to the chloroplast stroma. The catalysed reaction is N(6)-carboxybiotinyl-L-lysyl-[protein] + acetyl-CoA = N(6)-biotinyl-L-lysyl-[protein] + malonyl-CoA. It participates in lipid metabolism; malonyl-CoA biosynthesis; malonyl-CoA from acetyl-CoA: step 1/1. Component of the acetyl coenzyme A carboxylase (ACC) complex. Biotin carboxylase (BC) catalyzes the carboxylation of biotin on its carrier protein (BCCP) and then the CO(2) group is transferred by the transcarboxylase to acetyl-CoA to form malonyl-CoA. The polypeptide is Acetyl-coenzyme A carboxylase carboxyl transferase subunit beta, chloroplastic (Liriodendron tulipifera (Tuliptree)).